The following is a 941-amino-acid chain: Isoleucine--tRNA ligase (941 aa).

The short motif at 69–79 (PYANGDIHIGH) is the 'HIGH' region element. Glutamate 589 contacts L-isoleucyl-5'-AMP. Positions 630–634 (KMSKS) match the 'KMSKS' region motif. Position 633 (lysine 633) interacts with ATP. Residues cysteine 915, cysteine 918, cysteine 932, and cysteine 935 each contribute to the Zn(2+) site.

Belongs to the class-I aminoacyl-tRNA synthetase family. IleS type 1 subfamily. As to quaternary structure, monomer. Requires Zn(2+) as cofactor.

It localises to the cytoplasm. The catalysed reaction is tRNA(Ile) + L-isoleucine + ATP = L-isoleucyl-tRNA(Ile) + AMP + diphosphate. Functionally, catalyzes the attachment of isoleucine to tRNA(Ile). As IleRS can inadvertently accommodate and process structurally similar amino acids such as valine, to avoid such errors it has two additional distinct tRNA(Ile)-dependent editing activities. One activity is designated as 'pretransfer' editing and involves the hydrolysis of activated Val-AMP. The other activity is designated 'posttransfer' editing and involves deacylation of mischarged Val-tRNA(Ile). The sequence is that of Isoleucine--tRNA ligase from Zymomonas mobilis subsp. mobilis (strain ATCC 31821 / ZM4 / CP4).